Here is a 238-residue protein sequence, read N- to C-terminus: MEMTDFELTSNSQSNLAIPTNFKSTLPPRKRAKTKEEKEQRRIERILRNRRAAHQSREKKRLHLQYLERKCSLLENLLNSVNLEKLADHEDALTCSHDAFVASLDEYRDFQSTRGASLDTRASSHSSSDTFTPSPLNCTMEPATLSPKSMRDSASDQETSWELQMFKTENVPESTTLPAVDNNNLFDAVASPLADPLCDDIAGNSLPFDNSIDLDNWRNPEAQSGLNSFELNDFFITS.

Residues 1-39 (MEMTDFELTSNSQSNLAIPTNFKSTLPPRKRAKTKEEKE) form a disordered region. A compositionally biased stretch (polar residues) spans 7–24 (ELTSNSQSNLAIPTNFKS). The region spanning 39–102 (EQRRIERILR…LTCSHDAFVA (64 aa)) is the bZIP domain. The tract at residues 41–61 (RRIERILRNRRAAHQSREKKR) is basic motif. Positions 67 to 74 (LERKCSLL) are leucine-zipper. Residues 115 to 152 (GASLDTRASSHSSSDTFTPSPLNCTMEPATLSPKSMRD) form a disordered region. A compositionally biased stretch (low complexity) spans 117-134 (SLDTRASSHSSSDTFTPS).

The protein belongs to the bZIP family. Homodimer.

Its subcellular location is the nucleus. Transcriptional activator involved in the unfolded protein response (UPR) pathway. Recognizes and binds to the UPR element (UPRE) in the promoter of UPR-regulated genes such as KAR2, PDI1, EUG1 and FKB2. Increases the synthesis of endoplasmic reticulum-resident proteins required for protein folding as well as components of the secretory pathway. This Saccharomyces cerevisiae (strain ATCC 204508 / S288c) (Baker's yeast) protein is Transcriptional activator HAC1 (HAC1).